The following is a 258-amino-acid chain: Indole-3-glycerol phosphate synthase (258 aa).

This sequence belongs to the TrpC family.

The catalysed reaction is 1-(2-carboxyphenylamino)-1-deoxy-D-ribulose 5-phosphate + H(+) = (1S,2R)-1-C-(indol-3-yl)glycerol 3-phosphate + CO2 + H2O. Its pathway is amino-acid biosynthesis; L-tryptophan biosynthesis; L-tryptophan from chorismate: step 4/5. This is Indole-3-glycerol phosphate synthase from Exiguobacterium sibiricum (strain DSM 17290 / CCUG 55495 / CIP 109462 / JCM 13490 / 255-15).